A 903-amino-acid chain; its full sequence is FIGNL1-interacting regulator of recombination and mitosis (903 aa).

Serine 101 and serine 795 each carry phosphoserine. Lysine 843 carries the N6-acetyllysine modification.

In terms of assembly, interacts (via its N-terminal region) with PLK1; controls PLK1 kinase activity. Interacts (via the KVVXF motif) with PPP1CC; controls PLK1 kinase activity. Interacts with FIGNL1; may regulate homologous recombination. Post-translationally, phosphorylation at Ser-101 by PLK1 strengthens FIRRM-PLK1 interaction. Phosphorylation at Ser-795 by PLK1 negatively regulates its interaction with PPP1CC.

Its subcellular location is the chromosome. It is found in the centromere. It localises to the kinetochore. The protein resides in the nucleus. The protein localises to the midbody. Its subcellular location is the cytoplasm. It is found in the cytoskeleton. It localises to the spindle. In terms of biological role, regulates PLK1 kinase activity at kinetochores and promotes faithful chromosome segregation in prometaphase by bridging kinase and phosphatase activities. Phosphorylation of FIRRM by PLK1 negatively regulates its interaction with the phosphatase, PPP1CC, thus creating a negative feedback loop for maintaining proper PLK1 kinase activity during mitosis. In complex with FIGL1 may regulate homologous recombination. The sequence is that of FIGNL1-interacting regulator of recombination and mitosis from Mus musculus (Mouse).